We begin with the raw amino-acid sequence, 147 residues long: Large ribosomal subunit protein uL13 (147 aa).

It belongs to the universal ribosomal protein uL13 family. In terms of assembly, part of the 50S ribosomal subunit.

In terms of biological role, this protein is one of the early assembly proteins of the 50S ribosomal subunit, although it is not seen to bind rRNA by itself. It is important during the early stages of 50S assembly. This Beutenbergia cavernae (strain ATCC BAA-8 / DSM 12333 / CCUG 43141 / JCM 11478 / NBRC 16432 / NCIMB 13614 / HKI 0122) protein is Large ribosomal subunit protein uL13.